Here is a 1312-residue protein sequence, read N- to C-terminus: Rho GTPase-activating protein gacG (1312 aa).

6 disordered regions span residues 52–74 (VENN…KRSQ), 111–158 (SNNN…SSSD), 314–519 (ISSS…PRNF), 762–831 (NSIS…SSTG), 1185–1230 (NNNN…SSSV), and 1282–1312 (TGTS…IVEE). Composition is skewed to low complexity over residues 53 to 67 (ENNN…NSEN) and 111 to 146 (SNNN…YSPR). Residues 147-158 (NNNNNFTESSSD) are compositionally biased toward polar residues. 3 stretches are compositionally biased toward low complexity: residues 328 to 355 (TTAA…ANNS), 373 to 397 (HHSS…IGNS), and 414 to 436 (LNLT…NNGN). Residues 437–449 (EVIQSSSSTSSPR) are compositionally biased toward polar residues. Residues 479–507 (SSTNSLNNSTSSLKSSNNNILQQQQQQQQ) are compositionally biased toward low complexity. 2 stretches are compositionally biased toward polar residues: residues 508 to 518 (HYDSAPTTPRN) and 763 to 776 (SIST…GNIA). The segment covering 792 to 816 (NNNNNNNNNNNNNNNNNNNNNNNNN) has biased composition (low complexity). Positions 1030 to 1212 (SKIDPITGFN…HHNSHHHRDN (183 aa)) constitute a Rho-GAP domain. Positions 1196–1210 (HHHHHHHHHNSHHHR) are enriched in basic residues. Composition is skewed to low complexity over residues 1213–1222 (NNNNSNNNSS) and 1282–1305 (TGTS…RSPS).

It localises to the cytoplasm. Functionally, rho GTPase-activating protein involved in the signal transduction pathway. This Dictyostelium discoideum (Social amoeba) protein is Rho GTPase-activating protein gacG (gacG).